Consider the following 155-residue polypeptide: MRKNRAEKRDVLADPIYNSKLVTRAINKIMLDGKRGTAQTIIYDAFDIIKEKTGEEPIEIFNKAIENIKPHLELKVRRIGGANYQVPVEVSDERQVTLALRWLINYARLRNEKVMTVKLANEIIDASNNMGGSVKKREDTHKMAEANKAFAHYRW.

Belongs to the universal ribosomal protein uS7 family. Part of the 30S ribosomal subunit. Contacts proteins S9 and S11.

In terms of biological role, one of the primary rRNA binding proteins, it binds directly to 16S rRNA where it nucleates assembly of the head domain of the 30S subunit. Is located at the subunit interface close to the decoding center, probably blocks exit of the E-site tRNA. This chain is Small ribosomal subunit protein uS7, found in Mesoplasma florum (strain ATCC 33453 / NBRC 100688 / NCTC 11704 / L1) (Acholeplasma florum).